A 419-amino-acid polypeptide reads, in one-letter code: UDP-N-acetylglucosamine 1-carboxyvinyltransferase (419 aa).

K22–N23 provides a ligand contact to phosphoenolpyruvate. Position 93 (R93) interacts with UDP-N-acetyl-alpha-D-glucosamine. C117 serves as the catalytic Proton donor. At C117 the chain carries 2-(S-cysteinyl)pyruvic acid O-phosphothioketal. UDP-N-acetyl-alpha-D-glucosamine contacts are provided by D307 and I329.

This sequence belongs to the EPSP synthase family. MurA subfamily.

Its subcellular location is the cytoplasm. It catalyses the reaction phosphoenolpyruvate + UDP-N-acetyl-alpha-D-glucosamine = UDP-N-acetyl-3-O-(1-carboxyvinyl)-alpha-D-glucosamine + phosphate. Its pathway is cell wall biogenesis; peptidoglycan biosynthesis. Functionally, cell wall formation. Adds enolpyruvyl to UDP-N-acetylglucosamine. In Shewanella putrefaciens (strain CN-32 / ATCC BAA-453), this protein is UDP-N-acetylglucosamine 1-carboxyvinyltransferase.